We begin with the raw amino-acid sequence, 588 residues long: Sulfite reductase [NADPH] hemoprotein beta-component (588 aa).

Residues methionine 1 to glutamate 10 show a composition bias toward basic and acidic residues. Positions methionine 1–glutamate 20 are disordered. Cysteine 443, cysteine 449, cysteine 488, and cysteine 492 together coordinate [4Fe-4S] cluster. Residue cysteine 492 coordinates siroheme.

The protein belongs to the nitrite and sulfite reductase 4Fe-4S domain family. As to quaternary structure, alpha(8)-beta(8). The alpha component is a flavoprotein, the beta component is a hemoprotein. The cofactor is siroheme. [4Fe-4S] cluster serves as cofactor.

It carries out the reaction hydrogen sulfide + 3 NADP(+) + 3 H2O = sulfite + 3 NADPH + 4 H(+). It participates in sulfur metabolism; hydrogen sulfide biosynthesis; hydrogen sulfide from sulfite (NADPH route): step 1/1. Functionally, component of the sulfite reductase complex that catalyzes the 6-electron reduction of sulfite to sulfide. This is one of several activities required for the biosynthesis of L-cysteine from sulfate. This Mannheimia succiniciproducens (strain KCTC 0769BP / MBEL55E) protein is Sulfite reductase [NADPH] hemoprotein beta-component.